The primary structure comprises 234 residues: Transcriptional regulatory protein CitB (234 aa).

In terms of domain architecture, Response regulatory spans T5–A121. At D56 the chain carries 4-aspartylphosphate. A DNA-binding region (H-T-H motif) is located at residues A181–E200.

As to quaternary structure, in vitro CitB and the CitA kinase domain form a complex, formation of which is enhanced by ATP. Phosphorylated by CitA.

The protein localises to the cytoplasm. Its function is as follows. Member of the two-component regulatory system CitA/CitB essential for expression of citrate-specific fermentation genes. Phosphorylated CitB binds to two sites in the citS-citC intergenic region where it probably activates transcription of both genes. The sequence is that of Transcriptional regulatory protein CitB (citB) from Klebsiella pneumoniae.